We begin with the raw amino-acid sequence, 489 residues long: Rhamnulokinase (489 aa).

13-17 (ASSGR) is a binding site for ATP. C68 and C222 are oxidised to a cystine. Substrate contacts are provided by residues G83 and 236–238 (HDT). The Proton acceptor role is filled by D237. T259 lines the ATP pocket. Residue N296 coordinates substrate. Q304 serves as a coordination point for ATP. The cysteines at positions 353 and 370 are disulfide-linked. G402 contributes to the ATP binding site. A disulfide bridge connects residues C413 and C417.

Belongs to the rhamnulokinase family. In terms of assembly, monomer. Mg(2+) is required as a cofactor.

The enzyme catalyses L-rhamnulose + ATP = L-rhamnulose 1-phosphate + ADP + H(+). It functions in the pathway carbohydrate degradation; L-rhamnose degradation; glycerone phosphate from L-rhamnose: step 2/3. In terms of biological role, involved in the catabolism of L-rhamnose (6-deoxy-L-mannose). Catalyzes the transfer of the gamma-phosphate group from ATP to the 1-hydroxyl group of L-rhamnulose to yield L-rhamnulose 1-phosphate. This Escherichia coli O17:K52:H18 (strain UMN026 / ExPEC) protein is Rhamnulokinase.